A 626-amino-acid polypeptide reads, in one-letter code: Colicin-Ia (626 aa).

A translocation (T) region spans residues 23–225 (EIMAVDIYVN…TRLSELEKNG (203 aa)). Residues 276–286 (QQLTQQKNTPD) show a composition bias toward polar residues. The tract at residues 276 to 308 (QQLTQQKNTPDGKTIVSPEKFPGRSSTNHSIVV) is disordered. The receptor-binding (R) stretch occupies residues 282 to 385 (KNTPDGKTIV…LRQRLLDARN (104 aa)). Residues 450–626 (KDAINFTTEF…VEKANKFWGI (177 aa)) are channel (C). A run of 2 helical transmembrane segments spans residues 580–594 (ATALVALVFSILTGS) and 597–612 (GIIGYGLLMAVTGALI).

The protein belongs to the channel forming colicin family.

Its subcellular location is the cell membrane. In terms of biological role, this colicin is a channel-forming colicin. This class of transmembrane toxins depolarize the cytoplasmic membrane, leading to dissipation of cellular energy. Colicins are polypeptide toxins produced by and active against E.coli and closely related bacteria. The protein is Colicin-Ia (cia) of Escherichia coli.